Consider the following 503-residue polypeptide: MNRRRWWRSSERRWRGLVSLFLSVLSGFLTALSMPGFLSGALIWFSLIPLLYAVEGRGVWKRAFLSFVYFFTHVLISFFWVLPTLTENVPLVFGRYPSWLGIVVFVLMGIIEAVPFLGFGFLSYFAPQSIVLKTLYLASVYTIFEYLRGVGELGFTGGRISEALYSHTGLIQIVSITGTLGLVFLIVSLNVLFYEFLRRRKGLLIFPVIFFVYLLNSSVVHLLPVPERGSFKVVALQPNVPTSLKYSVSSGEMLELLESMTKDFHGSIVITPEAFFLEDVRYSQKLRELSEENTFVIGFPADNQNSVFVLEGGRFRKVYSKVKLFPFVEKLPYPRVFGVFSFLKGLSYYEPGRNFSVFNVGESPPLSVQICFESYFPEVSRAFVKNGSELLIVVTNDGWFHYKAALLNHFVQGVFRAVETRRQFLQVANTGITGLVDEYGRIVDALPLRVRLAGEFHIKARKGETFYVRYGDWFFYLSVILAVVSVFISRMRGERNEGIGIRL.

7 consecutive transmembrane segments (helical) span residues 13–32 (RWRG…LTAL), 34–54 (MPGF…LYAV), 63–83 (AFLS…WVLP), 102–122 (IVVF…FGFL), 124–144 (YFAP…YTIF), 173–193 (IVSI…NVLF), and 203–223 (LLIF…VHLL). Residues 231-460 (FKVVALQPNV…RLAGEFHIKA (230 aa)) form the CN hydrolase domain. Residue Glu-273 is the Proton acceptor of the active site. Residue Lys-321 is part of the active site. The Nucleophile role is filled by Cys-371. A helical membrane pass occupies residues 468-488 (VRYGDWFFYLSVILAVVSVFI).

This sequence belongs to the CN hydrolase family. Apolipoprotein N-acyltransferase subfamily.

Its subcellular location is the cell inner membrane. The enzyme catalyses N-terminal S-1,2-diacyl-sn-glyceryl-L-cysteinyl-[lipoprotein] + a glycerophospholipid = N-acyl-S-1,2-diacyl-sn-glyceryl-L-cysteinyl-[lipoprotein] + a 2-acyl-sn-glycero-3-phospholipid + H(+). It functions in the pathway protein modification; lipoprotein biosynthesis (N-acyl transfer). Catalyzes the phospholipid dependent N-acylation of the N-terminal cysteine of apolipoprotein, the last step in lipoprotein maturation. This is Apolipoprotein N-acyltransferase from Thermotoga maritima (strain ATCC 43589 / DSM 3109 / JCM 10099 / NBRC 100826 / MSB8).